The sequence spans 212 residues: Pyridoxine/pyridoxamine 5'-phosphate oxidase (212 aa).

Substrate contacts are provided by residues 7 to 10 (RREY) and K66. FMN is bound by residues 61–66 (RIVLLK), 76–77 (YT), R82, K83, and Q105. Substrate contacts are provided by Y123, R127, and S131. FMN contacts are provided by residues 140-141 (QS) and W185. 191 to 193 (RLH) is a substrate binding site. An FMN-binding site is contributed by R195.

This sequence belongs to the pyridoxamine 5'-phosphate oxidase family. In terms of assembly, homodimer. FMN is required as a cofactor.

It catalyses the reaction pyridoxamine 5'-phosphate + O2 + H2O = pyridoxal 5'-phosphate + H2O2 + NH4(+). The catalysed reaction is pyridoxine 5'-phosphate + O2 = pyridoxal 5'-phosphate + H2O2. Its pathway is cofactor metabolism; pyridoxal 5'-phosphate salvage; pyridoxal 5'-phosphate from pyridoxamine 5'-phosphate: step 1/1. It functions in the pathway cofactor metabolism; pyridoxal 5'-phosphate salvage; pyridoxal 5'-phosphate from pyridoxine 5'-phosphate: step 1/1. Its function is as follows. Catalyzes the oxidation of either pyridoxine 5'-phosphate (PNP) or pyridoxamine 5'-phosphate (PMP) into pyridoxal 5'-phosphate (PLP). The protein is Pyridoxine/pyridoxamine 5'-phosphate oxidase of Hahella chejuensis (strain KCTC 2396).